The following is a 680-amino-acid chain: Heterokaryon incompatibility protein 6, OR allele (680 aa).

Its function is as follows. Involved in the non-self-recognition during asexual growth of N.crassa. This process involves restriction of heterokaryon formation via genetic differences at 11 het loci, including mating type. In Neurospora crassa (strain ATCC 24698 / 74-OR23-1A / CBS 708.71 / DSM 1257 / FGSC 987), this protein is Heterokaryon incompatibility protein 6, OR allele (het-6).